Reading from the N-terminus, the 320-residue chain is Endolytic peptidoglycan transglycosylase RlpA (320 aa).

Belongs to the RlpA family.

Its function is as follows. Lytic transglycosylase with a strong preference for naked glycan strands that lack stem peptides. This is Endolytic peptidoglycan transglycosylase RlpA from Rickettsia prowazekii (strain Madrid E).